The following is a 415-amino-acid chain: Alditol oxidase (415 aa).

In terms of domain architecture, FAD-binding PCMH-type spans 12 to 179 (ITYTAKEVHR…TALTLDLEPA (168 aa)). The residue at position 46 (His-46) is a Pros-8alpha-FAD histidine. FAD is bound by residues Ser-106, Ser-111, Gly-114, 118 to 121 (TGTH), and Val-169. Ser-106 is a xylitol binding site. Xylitol contacts are provided by Glu-317, Arg-319, and Thr-342. Arg-319 is a binding site for FAD. His-369 contributes to the FAD binding site. Position 372 (Lys-372) interacts with xylitol.

This sequence belongs to the oxygen-dependent FAD-linked oxidoreductase family. In terms of assembly, monomer. The cofactor is FAD.

The catalysed reaction is an alditol + O2 = an aldose + H2O2. The enzyme catalyses xylitol + O2 = D-xylose + H2O2. It catalyses the reaction D-sorbitol + O2 = D-glucose + H2O2. In terms of biological role, oxidase that performs selective oxidation of the terminal primary hydroxyl group of several alditols, with a reduction of O2 to H2O2. Shows highest activity on xylitol and D-sorbitol, and to a lesser extent, can also use galactitol, D-mannitol, and D-arabitol as substrates in vitro. Is not active on D-glucose, D-xylose, D-galactose, D-mannose, D-fructose, L-sorbose, L-fucose, myoinositol, glycerol, ethyl alcohol, and meso-erythritol. This Streptomyces sp. (strain IKD472 / FERM P-14339) protein is Alditol oxidase.